Reading from the N-terminus, the 338-residue chain is MLAVRSLQHLSTVVLITAYGLVLVWYTVFGASPLHRCIYAVRPTGTNNDTALVWMKMNQTLLFLGAPTHPPNGGWRNHAHICYANLIAGRVVPFQVPPDAMNRRIMNVHEAVNCLETLWYTRVRLVVVGWFLYLAFVALHQRRCMFGVVSPAHKMVAPATYLLNYAGRIVSSVFLQYPYTKITRLLCELSVQRQNLVQLFETDPVTFLYHRPAIGVIVGCELMLRFVAVGLIVGTAFISRGACAITYPLFLTITTWCFVSTIGLTELYCILRRGPAPKNADKAAAPGRSKGLSGVCGRCCSIILSGIAVRLCYIAVVAGVVLVALHYEQEIQRRLFDV.

An N-terminal signal peptide occupies residues 1–30 (MLAVRSLQHLSTVVLITAYGLVLVWYTVFG). At 31 to 121 (ASPLHRCIYA…VNCLETLWYT (91 aa)) the chain is on the extracellular side. Positions 31–121 (ASPLHRCIYA…VNCLETLWYT (91 aa)) are involved in fusion. N-linked (GlcNAc...) asparagine; by host glycans are attached at residues N48 and N58. The helical transmembrane segment at 122–140 (RVRLVVVGWFLYLAFVALH) threads the bilayer. Topologically, residues 141–212 (QRRCMFGVVS…DPVTFLYHRP (72 aa)) are cytoplasmic. The helical transmembrane segment at 213–233 (AIGVIVGCELMLRFVAVGLIV) threads the bilayer. Residues 234 to 243 (GTAFISRGAC) are Extracellular-facing. Residues 244-264 (AITYPLFLTITTWCFVSTIGL) form a helical membrane-spanning segment. Over 265 to 301 (TELYCILRRGPAPKNADKAAAPGRSKGLSGVCGRCCS) the chain is Cytoplasmic. Residues 265–301 (TELYCILRRGPAPKNADKAAAPGRSKGLSGVCGRCCS) form an interaction with UL20 region. A helical transmembrane segment spans residues 302-322 (IILSGIAVRLCYIAVVAGVVL). The Extracellular portion of the chain corresponds to 323 to 338 (VALHYEQEIQRRLFDV).

The protein belongs to the alphaherpesvirinae glycoprotein K family. In terms of assembly, interacts (via UL20 interaction region) with protein UL20 (via N-terminus); this interaction probably plays a role in the coordinate transport of protein UL20 and gK to the trans-Golgi network (TGN), and is required for the cell surface expression of gK. In terms of processing, N-glycosylated.

It localises to the host cell membrane. It is found in the host endosome membrane. The protein resides in the host Golgi apparatus membrane. Its function is as follows. Glycoprotein that probably modulates membrane fusion events during secondary envelopment of cytoplasmic capsids that bud into specific trans-Golgi network (TGN)-derived membranes. Also plays a role, together with gB, in virus-induced cell-to-cell fusion (syncytia formation). Seems to block fusion of virions with infected-cell membranes. This chain is Envelope glycoprotein K (gK), found in Homo sapiens (Human).